A 228-amino-acid polypeptide reads, in one-letter code: 7-cyano-7-deazaguanine synthase (228 aa).

7–17 (LSGGLDSSTAL) lines the ATP pocket. Residues Cys-190, Cys-202, Cys-205, and Cys-208 each coordinate Zn(2+).

Belongs to the QueC family. It depends on Zn(2+) as a cofactor.

The enzyme catalyses 7-carboxy-7-deazaguanine + NH4(+) + ATP = 7-cyano-7-deazaguanine + ADP + phosphate + H2O + H(+). It functions in the pathway purine metabolism; 7-cyano-7-deazaguanine biosynthesis. In terms of biological role, catalyzes the ATP-dependent conversion of 7-carboxy-7-deazaguanine (CDG) to 7-cyano-7-deazaguanine (preQ(0)). This Acaryochloris marina (strain MBIC 11017) protein is 7-cyano-7-deazaguanine synthase.